Reading from the N-terminus, the 172-residue chain is Type IV secretion system putative outer membrane lipoprotein BAB2_0057 (172 aa).

An N-terminal signal peptide occupies residues 1–15; sequence MRTLVMVACAVSLAA. The N-palmitoyl cysteine moiety is linked to residue cysteine 16. A lipid anchor (S-diacylglycerol cysteine) is attached at cysteine 16. Residues 58–172 enclose the OmpA-like domain; it reads WPARPPKQTV…RRVDIEILRK (115 aa).

It is found in the cell outer membrane. In terms of biological role, the virB operon is essential for intracellular survival and is not involved in the invasion process. Constitutes a major determinant of virulence in mice. This protein is essential for pathogenesis in mice but is not required for intracellular survival. This chain is Type IV secretion system putative outer membrane lipoprotein BAB2_0057, found in Brucella abortus (strain 2308).